Consider the following 374-residue polypeptide: Ribosomal RNA large subunit methyltransferase G (374 aa).

The protein belongs to the methyltransferase superfamily. RlmG family.

It is found in the cytoplasm. It catalyses the reaction guanosine(1835) in 23S rRNA + S-adenosyl-L-methionine = N(2)-methylguanosine(1835) in 23S rRNA + S-adenosyl-L-homocysteine + H(+). In terms of biological role, specifically methylates the guanine in position 1835 (m2G1835) of 23S rRNA. This Pseudomonas aeruginosa (strain ATCC 15692 / DSM 22644 / CIP 104116 / JCM 14847 / LMG 12228 / 1C / PRS 101 / PAO1) protein is Ribosomal RNA large subunit methyltransferase G.